A 185-amino-acid polypeptide reads, in one-letter code: Elongation factor P (185 aa).

It belongs to the elongation factor P family.

The protein localises to the cytoplasm. It functions in the pathway protein biosynthesis; polypeptide chain elongation. In terms of biological role, involved in peptide bond synthesis. Stimulates efficient translation and peptide-bond synthesis on native or reconstituted 70S ribosomes in vitro. Probably functions indirectly by altering the affinity of the ribosome for aminoacyl-tRNA, thus increasing their reactivity as acceptors for peptidyl transferase. The sequence is that of Elongation factor P from Bacillus cereus (strain ATCC 10987 / NRS 248).